Reading from the N-terminus, the 513-residue chain is Fructose import ATP-binding protein FruK (513 aa).

2 ABC transporter domains span residues 8-244 and 262-505; these read VVMK…IGKS and PGEK…IANT. 40-47 provides a ligand contact to ATP; that stretch reads GENGAGKS.

Belongs to the ABC transporter superfamily. In terms of assembly, the complex is composed of an ATP-binding protein (FruK), two transmembrane proteins (FruF and FruG) and a solute-binding protein (FruE).

The protein resides in the cell membrane. The enzyme catalyses D-fructose(out) + ATP + H2O = D-fructose(in) + ADP + phosphate + H(+). In terms of biological role, part of the high-affinity ABC transporter complex FruEKFG involved in fructose uptake. Can also transport ribose and xylose, with lower affinity. Probably responsible for energy coupling to the transport system. In Bifidobacterium longum (strain NCC 2705), this protein is Fructose import ATP-binding protein FruK.